The following is a 346-amino-acid chain: Phosphoribosylformylglycinamidine cyclo-ligase (346 aa).

This sequence belongs to the AIR synthase family.

The protein resides in the cytoplasm. It catalyses the reaction 2-formamido-N(1)-(5-O-phospho-beta-D-ribosyl)acetamidine + ATP = 5-amino-1-(5-phospho-beta-D-ribosyl)imidazole + ADP + phosphate + H(+). The protein operates within purine metabolism; IMP biosynthesis via de novo pathway; 5-amino-1-(5-phospho-D-ribosyl)imidazole from N(2)-formyl-N(1)-(5-phospho-D-ribosyl)glycinamide: step 2/2. This is Phosphoribosylformylglycinamidine cyclo-ligase from Methylobacillus flagellatus (strain ATCC 51484 / DSM 6875 / VKM B-1610 / KT).